A 702-amino-acid chain; its full sequence is Rho GTPase-activating protein 22 (702 aa).

Residues 43 to 151 (PVLKAGWLRK…WVQAIRRVIW (109 aa)) enclose the PH domain. Positions 161 to 355 (QRLEDTVHHE…VLIRKHGQLF (195 aa)) constitute a Rho-GAP domain. Disordered regions lie at residues 360 to 433 (LEEP…HTLP), 438 to 457 (SFRQ…SSLE), 480 to 511 (RASS…FSST), and 555 to 596 (PSPL…TQAH). Phosphoserine occurs at positions 365 and 397. Composition is skewed to polar residues over residues 407-421 (SRTS…TGPA), 438-456 (SFRQ…NSSL), 491-504 (GSAQ…NVPP), and 581-594 (SGSS…SPTQ). Residues 594 to 691 (QAHVRRCRAL…EEFFSTLGSL (98 aa)) adopt a coiled-coil conformation.

In terms of assembly, interacts with VEZF1. In terms of tissue distribution, predominantly present in endothelial cells (at protein level).

The protein resides in the cytoplasm. The protein localises to the nucleus. Its function is as follows. Rho GTPase-activating protein involved in the signal transduction pathway that regulates endothelial cell capillary tube formation during angiogenesis. Acts as a GTPase activator for the RAC1 by converting it to an inactive GDP-bound state. Inhibits RAC1-dependent lamellipodia formation. May also play a role in transcription regulation via its interaction with VEZF1, by regulating activity of the endothelin-1 (EDN1) promoter. In Mus musculus (Mouse), this protein is Rho GTPase-activating protein 22 (Arhgap22).